We begin with the raw amino-acid sequence, 130 residues long: Small ribosomal subunit protein uS11c (130 aa).

Belongs to the universal ribosomal protein uS11 family. As to quaternary structure, part of the 30S ribosomal subunit.

It localises to the plastid. The protein resides in the chloroplast. The sequence is that of Small ribosomal subunit protein uS11c from Zygnema circumcarinatum (Green alga).